The chain runs to 211 residues: MRLTAKQVTWLKVSLHLAGLLPFLWLVWAINHGGLGADPVKDIQHFTGRTALKFLLATLLITPLARYAKQPLLIRTRRLLGLWCFAWATLHLTSYALLELGVNNLALLGKELITRPYLTLGIISWVILLALAFTSTQAMQRKLGKHWQQLHNFVYLVAILAPIHYLWSVKIISPQPLIYAGLAVLLLALRYKKLLSLFNRLRKQAHNKLSL.

5 helical membrane-spanning segments follow: residues 17-37, 82-102, 116-136, 153-173, and 178-198; these read LAGL…GLGA, LWCF…ELGV, PYLT…FTST, FVYL…KIIS, and IYAG…LSLF.

It belongs to the MsrQ family. Heterodimer of a catalytic subunit (MsrP) and a heme-binding subunit (MsrQ). FMN is required as a cofactor. The cofactor is heme b.

Its subcellular location is the cell inner membrane. Functionally, part of the MsrPQ system that repairs oxidized periplasmic proteins containing methionine sulfoxide residues (Met-O), using respiratory chain electrons. Thus protects these proteins from oxidative-stress damage caused by reactive species of oxygen and chlorine generated by the host defense mechanisms. MsrPQ is essential for the maintenance of envelope integrity under bleach stress, rescuing a wide series of structurally unrelated periplasmic proteins from methionine oxidation, including the primary periplasmic chaperone SurA and the lipoprotein Pal. MsrQ provides electrons for reduction to the reductase catalytic subunit MsrP, using the quinone pool of the respiratory chain. The sequence is that of Protein-methionine-sulfoxide reductase heme-binding subunit MsrQ from Shigella boydii serotype 4 (strain Sb227).